A 260-amino-acid polypeptide reads, in one-letter code: NAD-capped RNA hydrolase NudC (260 aa).

Arg-69 contributes to the substrate binding site. Positions 98 and 101 each coordinate Zn(2+). Glu-111 contributes to the substrate binding site. Cys-116 and Cys-119 together coordinate Zn(2+). Tyr-124 serves as a coordination point for substrate. The Nudix hydrolase domain occupies 125–248; it reads PQIAPCIIVA…TVARRLIEDT (124 aa). Residues Ala-158, Glu-174, and Glu-178 each contribute to the a divalent metal cation site. The Nudix box motif lies at 159–180; the sequence is GFVEVGETLEQTVVREVMEESQ. 192–199 contributes to the substrate binding site; sequence QPWPFPHS. Glu-219 is an a divalent metal cation binding site. Residue Ala-241 participates in substrate binding.

This sequence belongs to the Nudix hydrolase family. NudC subfamily. Homodimer. Mg(2+) serves as cofactor. Mn(2+) is required as a cofactor. The cofactor is Zn(2+).

It carries out the reaction a 5'-end NAD(+)-phospho-ribonucleoside in mRNA + H2O = a 5'-end phospho-adenosine-phospho-ribonucleoside in mRNA + beta-nicotinamide D-ribonucleotide + 2 H(+). The catalysed reaction is NAD(+) + H2O = beta-nicotinamide D-ribonucleotide + AMP + 2 H(+). The enzyme catalyses NADH + H2O = reduced beta-nicotinamide D-ribonucleotide + AMP + 2 H(+). Functionally, mRNA decapping enzyme that specifically removes the nicotinamide adenine dinucleotide (NAD) cap from a subset of mRNAs by hydrolyzing the diphosphate linkage to produce nicotinamide mononucleotide (NMN) and 5' monophosphate mRNA. The NAD-cap is present at the 5'-end of some mRNAs and stabilizes RNA against 5'-processing. Has preference for mRNAs with a 5'-end purine. Catalyzes the hydrolysis of a broad range of dinucleotide pyrophosphates. The chain is NAD-capped RNA hydrolase NudC from Pectobacterium carotovorum subsp. carotovorum (strain PC1).